A 103-amino-acid polypeptide reads, in one-letter code: Growth-regulated alpha protein (103 aa).

The N-terminal stretch at Met-1–Gly-30 is a signal peptide. Intrachain disulfides connect Cys-39–Cys-65 and Cys-41–Cys-81.

It belongs to the intercrine alpha (chemokine CxC) family.

It localises to the secreted. Functionally, has chemotactic activity for neutrophils. The sequence is that of Growth-regulated alpha protein (CXCL1) from Ovis aries (Sheep).